Reading from the N-terminus, the 491-residue chain is Cytochrome P450 monooxygenase olcB (491 aa).

A helical membrane pass occupies residues 5–27; sequence LLLSLSVCLLYVFITAFWNLYIH. Position 435 (Cys-435) interacts with heme.

Belongs to the cytochrome P450 family. Heme is required as a cofactor.

The protein localises to the membrane. It functions in the pathway secondary metabolite biosynthesis; terpenoid biosynthesis. In terms of biological role, cytochrome P450 monooxygenase; part of the gene cluster that mediates the biosynthesis of 15-deoxyoxalicine B. The first step of the pathway is the synthesis of nicotinyl-CoA from nicotinic acid by the nicotinic acid-CoA ligase olcI. Nicotinyl-CoA is then a substrate of polyketide synthase olcA to produce 4-hydroxy-6-(3-pyridinyl)-2H-pyran-2-one (HPPO) which is further prenylated by the polyprenyl transferase olcH to yield geranylgeranyl-HPPO. Geranylgeranyl pyrophosphate is provided by the cluster-specific geranylgeranyl pyrophosphate synthase olcC. The FAD-dependent monooxygenase olcE catalyzes the epoxidation of geranylgeranyl-HPPO and the terpene cyclase olcD catalyzes the cyclization of the terpenoid component, resulting in the formation of the tricyclic terpene moiety seen in predecaturin E. The cytochrome P450 monooxygenase then catalyzes the allylic oxidation of predecaturin E, which is followed by spirocylization with concomitant loss of one molecule of water to form decaturin E. Decaturin E is the substrate of the cytochrome P450 monooxygenase olcJ which hydroxylates it at the C-29 position to form decaturin F. The short-chain dehydrogenase/reductase olcF may catalyze the oxidation of decaturin F to generate the 29-hydroxyl-27-one intermediate, and subsequent hemiacetal formation probably leads to the formation of decaturin C. The dioxygenase olcK may be a peroxisomal enzyme that catalyzes the hydroxylation of decaturin C into decaturin A once decaturin C is shuttled into the peroxisome by the MFS transporter olcL. Finally the cytochrome P450 monooxygenase olcB catalyzes the oxidative rearrangement to yield 15-deoxyoxalicine B. In the absence of olcJ, decaturin E may be shunted to a pathway in which it is oxidized to a ketone, possibly by olcF, to form decaturin D, which undergoes further allylic oxidation to yield decaturin G. Moreover, in the absence of oclK or oclL, oclB can convert decaturin C into 15-deoxyoxalicine A. This is Cytochrome P450 monooxygenase olcB from Penicillium canescens.